A 341-amino-acid chain; its full sequence is MAKVYYNGDVNEQVLEGKTVAIVGYGSQGHAHAQNLRESGVDVIIGLRPGKSWDKATEDGFSVYSVREASAKADIIMILSPDEHQPAIYKESIEPELTAGKALVFAHGFNIHFNQIVPPEHVDVFLAAPKGPGHLVRRTYTEGAGVPALIAVYQDATGQAKDIALAYAKQIGAARAGVLETTFKEETETDLFGEQAVLCGGTSALVKAGFETLVEAGYQPEIAYFECLHELKLIVDLMYEGGLEYMRYSISDTAQWGDFQAGPRIVTDETKAAMKEILSDIQKGKFAKGWILENKLNRPEYNAINEAEKNHPLEVVGRELREMMPFVKASKSKGVVANAKN.

In terms of domain architecture, KARI N-terminal Rossmann spans 2–181; the sequence is AKVYYNGDVN…GAARAGVLET (180 aa). Residues 25–28, arginine 48, serine 52, and 82–85 each bind NADP(+); these read YGSQ and DEHQ. Residue histidine 107 is part of the active site. Glycine 133 contacts NADP(+). A KARI C-terminal knotted domain is found at 182 to 327; that stretch reads TFKEETETDL…RELREMMPFV (146 aa). Mg(2+)-binding residues include aspartate 190, glutamate 194, glutamate 226, and glutamate 230. Serine 251 contacts substrate.

Belongs to the ketol-acid reductoisomerase family. Requires Mg(2+) as cofactor.

It catalyses the reaction (2R)-2,3-dihydroxy-3-methylbutanoate + NADP(+) = (2S)-2-acetolactate + NADPH + H(+). It carries out the reaction (2R,3R)-2,3-dihydroxy-3-methylpentanoate + NADP(+) = (S)-2-ethyl-2-hydroxy-3-oxobutanoate + NADPH + H(+). It participates in amino-acid biosynthesis; L-isoleucine biosynthesis; L-isoleucine from 2-oxobutanoate: step 2/4. It functions in the pathway amino-acid biosynthesis; L-valine biosynthesis; L-valine from pyruvate: step 2/4. Functionally, involved in the biosynthesis of branched-chain amino acids (BCAA). Catalyzes an alkyl-migration followed by a ketol-acid reduction of (S)-2-acetolactate (S2AL) to yield (R)-2,3-dihydroxy-isovalerate. In the isomerase reaction, S2AL is rearranged via a Mg-dependent methyl migration to produce 3-hydroxy-3-methyl-2-ketobutyrate (HMKB). In the reductase reaction, this 2-ketoacid undergoes a metal-dependent reduction by NADPH to yield (R)-2,3-dihydroxy-isovalerate. This is Ketol-acid reductoisomerase (NADP(+)) from Shouchella clausii (strain KSM-K16) (Alkalihalobacillus clausii).